A 425-amino-acid polypeptide reads, in one-letter code: UDP-N-acetylglucosamine 1-carboxyvinyltransferase (425 aa).

A phosphoenolpyruvate-binding site is contributed by 22-23; it reads KN. Arg98 is a binding site for UDP-N-acetyl-alpha-D-glucosamine. Cys122 functions as the Proton donor in the catalytic mechanism. Residue Cys122 is modified to 2-(S-cysteinyl)pyruvic acid O-phosphothioketal. Residues 127-131, Asp313, and Ile335 each bind UDP-N-acetyl-alpha-D-glucosamine; that span reads RPVDQ.

It belongs to the EPSP synthase family. MurA subfamily.

Its subcellular location is the cytoplasm. It catalyses the reaction phosphoenolpyruvate + UDP-N-acetyl-alpha-D-glucosamine = UDP-N-acetyl-3-O-(1-carboxyvinyl)-alpha-D-glucosamine + phosphate. It functions in the pathway cell wall biogenesis; peptidoglycan biosynthesis. Its function is as follows. Cell wall formation. Adds enolpyruvyl to UDP-N-acetylglucosamine. In Xylella fastidiosa (strain M12), this protein is UDP-N-acetylglucosamine 1-carboxyvinyltransferase.